Here is a 361-residue protein sequence, read N- to C-terminus: Phospho-N-acetylmuramoyl-pentapeptide-transferase (361 aa).

10 consecutive transmembrane segments (helical) span residues 18 to 38, 73 to 93, 97 to 117, 135 to 155, 168 to 188, 196 to 216, 235 to 255, 263 to 283, 288 to 308, and 338 to 358; these read VFNYLTFRSIVSALTALILVL, TMGGVLIIVAIVISVLLWGDL, FIWVILLVTVAFSAIGWMDDY, LLQSIIGALAAVYLYFSATTG, VLPNLGLFYIVLAYFVIVGSS, GLDGLALMPTVMIGAALGVFA, GAGEVVVFCSALVGAGLGFLW, VFMGDVGSLGLGAALGVTAVV, LVYFLMGGIFVAETLSVILQV, and KVIVRFWIITFILVLCGLATL.

This sequence belongs to the glycosyltransferase 4 family. MraY subfamily. It depends on Mg(2+) as a cofactor.

The protein resides in the cell inner membrane. It carries out the reaction UDP-N-acetyl-alpha-D-muramoyl-L-alanyl-gamma-D-glutamyl-meso-2,6-diaminopimeloyl-D-alanyl-D-alanine + di-trans,octa-cis-undecaprenyl phosphate = di-trans,octa-cis-undecaprenyl diphospho-N-acetyl-alpha-D-muramoyl-L-alanyl-D-glutamyl-meso-2,6-diaminopimeloyl-D-alanyl-D-alanine + UMP. It participates in cell wall biogenesis; peptidoglycan biosynthesis. Catalyzes the initial step of the lipid cycle reactions in the biosynthesis of the cell wall peptidoglycan: transfers peptidoglycan precursor phospho-MurNAc-pentapeptide from UDP-MurNAc-pentapeptide onto the lipid carrier undecaprenyl phosphate, yielding undecaprenyl-pyrophosphoryl-MurNAc-pentapeptide, known as lipid I. In Coxiella burnetii (strain CbuK_Q154) (Coxiella burnetii (strain Q154)), this protein is Phospho-N-acetylmuramoyl-pentapeptide-transferase.